The chain runs to 173 residues: Ribulose bisphosphate carboxylase small subunit, chloroplastic 5 (173 aa).

A chloroplast-targeting transit peptide spans 1 to 49; the sequence is MASIPATVATVAQANMVAPFTGLKSNAAFPVTKKVNDFSTLPSNGGRVQ.

This sequence belongs to the RuBisCO small chain family. In terms of assembly, heterohexadecamer of 8 large and 8 small subunits.

It is found in the plastid. It localises to the chloroplast. RuBisCO catalyzes two reactions: the carboxylation of D-ribulose 1,5-bisphosphate, the primary event in carbon dioxide fixation, as well as the oxidative fragmentation of the pentose substrate. Both reactions occur simultaneously and in competition at the same active site. Although the small subunit is not catalytic it is essential for maximal activity. The chain is Ribulose bisphosphate carboxylase small subunit, chloroplastic 5 from Flaveria pringlei.